A 142-amino-acid chain; its full sequence is ATP synthase epsilon chain (142 aa).

The protein belongs to the ATPase epsilon chain family. As to quaternary structure, F-type ATPases have 2 components, CF(1) - the catalytic core - and CF(0) - the membrane proton channel. CF(1) has five subunits: alpha(3), beta(3), gamma(1), delta(1), epsilon(1). CF(0) has three main subunits: a, b and c.

The protein resides in the cell inner membrane. Functionally, produces ATP from ADP in the presence of a proton gradient across the membrane. The chain is ATP synthase epsilon chain from Coxiella burnetii (strain CbuK_Q154) (Coxiella burnetii (strain Q154)).